The following is a 165-amino-acid chain: Protein AIG2 C (165 aa).

14 to 19 lines the substrate pocket; that stretch reads YGSILE. Catalysis depends on Glu82, which acts as the Proton acceptor.

Belongs to the gamma-glutamylcyclotransferase family. In terms of tissue distribution, expressed in floral organs, leaves, stems and roots.

Functionally, putative gamma-glutamylcyclotransferase. The polypeptide is Protein AIG2 C (Arabidopsis thaliana (Mouse-ear cress)).